The primary structure comprises 147 residues: Nucleoside diphosphate kinase (147 aa).

6 residues coordinate ATP: lysine 9, phenylalanine 57, arginine 85, threonine 91, arginine 102, and asparagine 112. Histidine 115 (pros-phosphohistidine intermediate) is an active-site residue.

This sequence belongs to the NDK family. In terms of assembly, homotetramer. Mg(2+) is required as a cofactor.

It is found in the cytoplasm. The enzyme catalyses a 2'-deoxyribonucleoside 5'-diphosphate + ATP = a 2'-deoxyribonucleoside 5'-triphosphate + ADP. The catalysed reaction is a ribonucleoside 5'-diphosphate + ATP = a ribonucleoside 5'-triphosphate + ADP. In terms of biological role, major role in the synthesis of nucleoside triphosphates other than ATP. The ATP gamma phosphate is transferred to the NDP beta phosphate via a ping-pong mechanism, using a phosphorylated active-site intermediate. This Fervidobacterium nodosum (strain ATCC 35602 / DSM 5306 / Rt17-B1) protein is Nucleoside diphosphate kinase.